Reading from the N-terminus, the 39-residue chain is Photosystem II reaction center protein Psb30 (39 aa).

The helical transmembrane segment at 12-32 (IFQLTFVGLIMVAGPVVIFLL) threads the bilayer.

It belongs to the Psb30/Ycf12 family. As to quaternary structure, PSII is composed of 1 copy each of membrane proteins PsbA, PsbB, PsbC, PsbD, PsbE, PsbF, PsbH, PsbI, PsbJ, PsbK, PsbL, PsbM, PsbT, PsbX, PsbY, PsbZ, Psb30/Ycf12, peripheral proteins PsbO, CyanoQ (PsbQ), PsbU, PsbV and a large number of cofactors. It forms dimeric complexes.

The protein resides in the cellular thylakoid membrane. Functionally, a core subunit of photosystem II (PSII), probably helps stabilize the reaction center. This Rippkaea orientalis (strain PCC 8801 / RF-1) (Cyanothece sp. (strain PCC 8801)) protein is Photosystem II reaction center protein Psb30.